The primary structure comprises 422 residues: ATP-dependent RNA helicase RhlB (422 aa).

The Q motif signature appears at 9–37 (QKFSDFALHPLVIKAIENQGFYHCTPIQA). Residues 40 to 219 (FPITLAGRDV…FEQMNHPEYI (180 aa)) form the Helicase ATP-binding domain. 53 to 60 (AQTGTGKT) contacts ATP. A DEAD box motif is present at residues 165 to 168 (DEAD). One can recognise a Helicase C-terminal domain in the interval 245–390 (RLLQTLIEEE…TSEYNKEALL (146 aa)). The segment at 394-422 (PQPKRLQRHHRHYAGSRNQGASRKPRSPQ) is disordered. Over residues 398-407 (RLQRHHRHYA) the composition is skewed to basic residues.

The protein belongs to the DEAD box helicase family. RhlB subfamily. Component of the RNA degradosome, which is a multiprotein complex involved in RNA processing and mRNA degradation.

It localises to the cytoplasm. The enzyme catalyses ATP + H2O = ADP + phosphate + H(+). Its function is as follows. DEAD-box RNA helicase involved in RNA degradation. Has RNA-dependent ATPase activity and unwinds double-stranded RNA. In Hamiltonella defensa subsp. Acyrthosiphon pisum (strain 5AT), this protein is ATP-dependent RNA helicase RhlB.